The chain runs to 221 residues: GTP-binding nuclear protein Ran-A1 (221 aa).

The Small GTPase Ran-type domain maps to 10–174 (DYPSFKLVIV…LYLARKLAGD (165 aa)). 21-28 (DGGTGKTT) serves as a coordination point for GTP. A switch-I region spans residues 40–48 (KKYEPTIGV). GTP is bound by residues Gly-71, 125–128 (NKVD), and 153–155 (SAK). Positions 71–87 (GQEKFGGLRDGYYIHGQ) are switch-II. Residues 199 to 208 (QHEAELAAAA) are compositionally biased toward low complexity. The segment at 199–221 (QHEAELAAAASQPLPDDDDETFD) is disordered.

This sequence belongs to the small GTPase superfamily. Ran family. Found in a nuclear export complex with RanGTP, exportin and pre-miRNA.

Its subcellular location is the nucleus. Functionally, GTP-binding protein involved in nucleocytoplasmic transport. Required for the import of protein into the nucleus and also for RNA export. Involved in chromatin condensation and control of cell cycle. The protein is GTP-binding nuclear protein Ran-A1 (RAN-A1) of Nicotiana tabacum (Common tobacco).